We begin with the raw amino-acid sequence, 154 residues long: Myoglobin (154 aa).

The Globin domain maps to 2 to 148 (GLSDGEWQLV…FRNDMAAKYK (147 aa)). S4 is subject to Phosphoserine. H65 lines the nitrite pocket. Residue H65 coordinates O2. T68 bears the Phosphothreonine mark. Residue H94 participates in heme b binding.

This sequence belongs to the globin family. As to quaternary structure, monomeric.

The protein resides in the cytoplasm. The protein localises to the sarcoplasm. It catalyses the reaction Fe(III)-heme b-[protein] + nitric oxide + H2O = Fe(II)-heme b-[protein] + nitrite + 2 H(+). It carries out the reaction H2O2 + AH2 = A + 2 H2O. Functionally, monomeric heme protein which primary function is to store oxygen and facilitate its diffusion within muscle tissues. Reversibly binds oxygen through a pentacoordinated heme iron and enables its timely and efficient release as needed during periods of heightened demand. Depending on the oxidative conditions of tissues and cells, and in addition to its ability to bind oxygen, it also has a nitrite reductase activity whereby it regulates the production of bioactive nitric oxide. Under stress conditions, like hypoxia and anoxia, it also protects cells against reactive oxygen species thanks to its pseudoperoxidase activity. In Aotus trivirgatus (Three-striped night monkey), this protein is Myoglobin (MB).